A 509-amino-acid polypeptide reads, in one-letter code: ATP synthase subunit alpha (509 aa).

169–176 (GDRQTGKT) provides a ligand contact to ATP.

This sequence belongs to the ATPase alpha/beta chains family. As to quaternary structure, F-type ATPases have 2 components, CF(1) - the catalytic core - and CF(0) - the membrane proton channel. CF(1) has five subunits: alpha(3), beta(3), gamma(1), delta(1), epsilon(1). CF(0) has three main subunits: a(1), b(2) and c(9-12). The alpha and beta chains form an alternating ring which encloses part of the gamma chain. CF(1) is attached to CF(0) by a central stalk formed by the gamma and epsilon chains, while a peripheral stalk is formed by the delta and b chains.

It localises to the cell inner membrane. The enzyme catalyses ATP + H2O + 4 H(+)(in) = ADP + phosphate + 5 H(+)(out). Its function is as follows. Produces ATP from ADP in the presence of a proton gradient across the membrane. The alpha chain is a regulatory subunit. The sequence is that of ATP synthase subunit alpha from Rhizobium etli (strain ATCC 51251 / DSM 11541 / JCM 21823 / NBRC 15573 / CFN 42).